The following is a 518-amino-acid chain: Bifunctional enzyme NanE/NanK (518 aa).

The interval 1 to 234 is manNAc-6-P epimerase; that stretch reads MCRVQGMIEE…DAVESAAKPS (234 aa). The manNAc kinase stretch occupies residues 235–518; that stretch reads SPVLAFDIGG…VADLAATYFS (284 aa). Residues 239–246 and 365–372 contribute to the ATP site; these read AFDIGGTK and GIGGGIVL.

The protein in the N-terminal section; belongs to the NanE family. This sequence in the C-terminal section; belongs to the ROK (NagC/XylR) family. NanK subfamily.

It carries out the reaction an N-acyl-D-glucosamine 6-phosphate = an N-acyl-D-mannosamine 6-phosphate. It catalyses the reaction an N-acyl-D-mannosamine + ATP = an N-acyl-D-mannosamine 6-phosphate + ADP + H(+). It participates in amino-sugar metabolism; N-acetylneuraminate degradation; D-fructose 6-phosphate from N-acetylneuraminate: step 2/5. The protein operates within amino-sugar metabolism; N-acetylneuraminate degradation; D-fructose 6-phosphate from N-acetylneuraminate: step 3/5. Its function is as follows. Converts N-acetylmannosamine-6-phosphate (ManNAc-6-P) to N-acetylglucosamine-6-phosphate (GlcNAc-6-P). In terms of biological role, catalyzes the phosphorylation of N-acetylmannosamine (ManNAc) to ManNAc-6-P. The polypeptide is Bifunctional enzyme NanE/NanK (nanEK) (Brucella melitensis biotype 1 (strain ATCC 23456 / CCUG 17765 / NCTC 10094 / 16M)).